The sequence spans 305 residues: tRNA dimethylallyltransferase (305 aa).

Residue G8–T15 participates in ATP binding. T10–T15 contacts substrate. The interaction with substrate tRNA stretch occupies residues D33–Q36.

It belongs to the IPP transferase family. As to quaternary structure, monomer. It depends on Mg(2+) as a cofactor.

It catalyses the reaction adenosine(37) in tRNA + dimethylallyl diphosphate = N(6)-dimethylallyladenosine(37) in tRNA + diphosphate. Functionally, catalyzes the transfer of a dimethylallyl group onto the adenine at position 37 in tRNAs that read codons beginning with uridine, leading to the formation of N6-(dimethylallyl)adenosine (i(6)A). The chain is tRNA dimethylallyltransferase from Thermotoga maritima (strain ATCC 43589 / DSM 3109 / JCM 10099 / NBRC 100826 / MSB8).